The sequence spans 313 residues: tRNA dimethylallyltransferase (313 aa).

Gly11–Thr18 contacts ATP. Thr13 to Thr18 lines the substrate pocket. Interaction with substrate tRNA stretches follow at residues Asp36 to Leu39, Gln160 to Arg164, and Arg243 to Arg248.

The protein belongs to the IPP transferase family. As to quaternary structure, monomer. The cofactor is Mg(2+).

It carries out the reaction adenosine(37) in tRNA + dimethylallyl diphosphate = N(6)-dimethylallyladenosine(37) in tRNA + diphosphate. Its function is as follows. Catalyzes the transfer of a dimethylallyl group onto the adenine at position 37 in tRNAs that read codons beginning with uridine, leading to the formation of N6-(dimethylallyl)adenosine (i(6)A). In Neisseria gonorrhoeae (strain ATCC 700825 / FA 1090), this protein is tRNA dimethylallyltransferase.